A 266-amino-acid chain; its full sequence is Gasdermin bGSDM (266 aa).

The S-palmitoyl cysteine moiety is linked to residue C6. The next 4 membrane-spanning stretches (beta stranded) occupy residues 70 to 86 (ISHSETSRKSLQAAGNF), 99 to 117 (APKLDLSFARGAVVTFSFS), 163 to 180 (AIDMTLATDGSAKVDVQA), and 189 to 205 (LGGKAECEVKSSTTISF). The interval 245–266 (GAAEPYLLRRGQVLIVEDMQAT) is C-terminal region.

This sequence belongs to the bacterial gasdermin family. Monomer. In terms of assembly, forms large, homooligomeric ring-shaped pores when inserted in membranes. In terms of processing, cleavage by the adjacently encoded protease (probably ISF6_0256) predicted to occur between Glu-244 and Gly-245 relieves autoinhibition, releasing the N-terminus which initiates loss of cell integrity. Palmitoylation helps stabilize the inactive state; may self palmitoylate. Palmitoylation plays a significant role in pore formation.

It localises to the cytoplasm. It is found in the cell inner membrane. Its activity is regulated as follows. The full-length protein before cleavage is inactive: intramolecular interactions between the N-terminal domain and the C-terminal region as well as the lipid modification, mediate autoinhibition. The pyroptosis-like-inducing activity is carried by the released N-terminal domain (Gasdermin bGSDM, N-terminus). Precursor of a pore-forming protein involved in defense against bacteriophages. Cleavage of this precursor by its dedicated, neighboring protease (probably ISF6_0256) releases the active moiety (gasdermin bGSDM, N-terminus) which inserts into membranes, forming pores and triggering cell death. Functionally, pore-forming protein that causes membrane permeabilization via a pyroptosis-like activity. Makes ring-like pores with an interior pore diameter of 300-400 Angstroms, when integrated in liposomes. The polypeptide is Gasdermin bGSDM (Piscinibacter sakaiensis (Ideonella sakaiensis)).